We begin with the raw amino-acid sequence, 369 residues long: Superinfection exclusion protein (369 aa).

The signal sequence occupies residues Met1–Thr15.

It belongs to the serpin family. Orthopoxvirus OPG040 subfamily. Interacts with A56 protein.

It is found in the virion membrane. Its subcellular location is the host cell membrane. In terms of biological role, prevents cell to cell fusion via its interaction with A56 protein. The A56-K2 complex associates with components of the entry fusion complex (EFC) presumably to avoid superinfection and syncytium formation. The protein is Superinfection exclusion protein (OPG040) of Vaccinia virus (strain Ankara) (VACV).